The following is a 303-amino-acid chain: Quinolinate synthase (303 aa).

H24 and S41 together coordinate iminosuccinate. C86 contacts [4Fe-4S] cluster. Residues 112–114 (YIN) and S129 contribute to the iminosuccinate site. Position 172 (C172) interacts with [4Fe-4S] cluster. Iminosuccinate-binding positions include 198 to 200 (HPE) and T215. C260 is a binding site for [4Fe-4S] cluster.

This sequence belongs to the quinolinate synthase family. Type 2 subfamily. The cofactor is [4Fe-4S] cluster.

It localises to the cytoplasm. It catalyses the reaction iminosuccinate + dihydroxyacetone phosphate = quinolinate + phosphate + 2 H2O + H(+). Its pathway is cofactor biosynthesis; NAD(+) biosynthesis; quinolinate from iminoaspartate: step 1/1. Functionally, catalyzes the condensation of iminoaspartate with dihydroxyacetone phosphate to form quinolinate. This is Quinolinate synthase from Caldicellulosiruptor bescii (strain ATCC BAA-1888 / DSM 6725 / KCTC 15123 / Z-1320) (Anaerocellum thermophilum).